We begin with the raw amino-acid sequence, 435 residues long: 5-methylthioadenosine/S-adenosylhomocysteine deaminase (435 aa).

Zn(2+) is bound by residues H65 and H67. Positions 94, 150, and 189 each coordinate substrate. Residue H216 coordinates Zn(2+). Residues E219 and D304 each contribute to the substrate site. D304 contacts Zn(2+).

It belongs to the metallo-dependent hydrolases superfamily. MTA/SAH deaminase family. It depends on Zn(2+) as a cofactor.

The enzyme catalyses S-adenosyl-L-homocysteine + H2O + H(+) = S-inosyl-L-homocysteine + NH4(+). The catalysed reaction is S-methyl-5'-thioadenosine + H2O + H(+) = S-methyl-5'-thioinosine + NH4(+). Catalyzes the deamination of 5-methylthioadenosine and S-adenosyl-L-homocysteine into 5-methylthioinosine and S-inosyl-L-homocysteine, respectively. Is also able to deaminate adenosine. This is 5-methylthioadenosine/S-adenosylhomocysteine deaminase from Bacillus cereus (strain ZK / E33L).